We begin with the raw amino-acid sequence, 365 residues long: Snurportin-1 (365 aa).

The region spanning 10–72 (GGVALAAPNS…RLAEGDWAGV (63 aa)) is the IBB domain. Disordered stretches follow at residues 15-34 (AAPN…KGRG) and 69-90 (WAGV…EMEV). A compositionally biased stretch (acidic residues) spans 73-90 (ESDEDGGEDGDGEEEMEV). The segment at 129-131 (GKR) is interaction with m3G-cap structure. Positions 211–333 (LSSKIQEEEG…GKAQPSAEAA (123 aa)) are necessary for binding to the m3G-cap structure. The segment at 317-365 (RSKKLAAGKAQPSAEAAARNGHYELEHLSTPQPANSAQGQEEAGSQMEN) is disordered. Over residues 345–355 (STPQPANSAQG) the composition is skewed to polar residues.

This sequence belongs to the snurportin family.

The protein resides in the nucleus. It is found in the cytoplasm. In terms of biological role, functions as an U snRNP-specific nuclear import adapter. Involved in the trimethylguanosine (m3G)-cap-dependent nuclear import of U snRNPs. Binds specifically to the terminal m3G-cap U snRNAs. The sequence is that of Snurportin-1 (SNUPN) from Gallus gallus (Chicken).